The primary structure comprises 408 residues: 1-deoxy-D-xylulose 5-phosphate reductoisomerase (408 aa).

Residues Thr26, Gly27, Ser28, Ile29, and Asn143 each contribute to the NADPH site. Lys144 provides a ligand contact to 1-deoxy-D-xylulose 5-phosphate. Residue Glu145 coordinates NADPH. Asp167 provides a ligand contact to Mn(2+). 1-deoxy-D-xylulose 5-phosphate contacts are provided by Ser168, Glu169, Ser193, and His216. A Mn(2+)-binding site is contributed by Glu169. Residue Gly222 participates in NADPH binding. The 1-deoxy-D-xylulose 5-phosphate site is built by Ser229, Asn234, Lys235, and Glu238. Glu238 lines the Mn(2+) pocket.

The protein belongs to the DXR family. It depends on Mg(2+) as a cofactor. The cofactor is Mn(2+).

It catalyses the reaction 2-C-methyl-D-erythritol 4-phosphate + NADP(+) = 1-deoxy-D-xylulose 5-phosphate + NADPH + H(+). It participates in isoprenoid biosynthesis; isopentenyl diphosphate biosynthesis via DXP pathway; isopentenyl diphosphate from 1-deoxy-D-xylulose 5-phosphate: step 1/6. Catalyzes the NADPH-dependent rearrangement and reduction of 1-deoxy-D-xylulose-5-phosphate (DXP) to 2-C-methyl-D-erythritol 4-phosphate (MEP). This is 1-deoxy-D-xylulose 5-phosphate reductoisomerase from Corynebacterium jeikeium (strain K411).